A 471-amino-acid polypeptide reads, in one-letter code: 3-isopropylmalate dehydratase large subunit (471 aa).

3 residues coordinate [4Fe-4S] cluster: Cys-347, Cys-407, and Cys-410.

This sequence belongs to the aconitase/IPM isomerase family. LeuC type 1 subfamily. Heterodimer of LeuC and LeuD. [4Fe-4S] cluster serves as cofactor.

The catalysed reaction is (2R,3S)-3-isopropylmalate = (2S)-2-isopropylmalate. The protein operates within amino-acid biosynthesis; L-leucine biosynthesis; L-leucine from 3-methyl-2-oxobutanoate: step 2/4. Its function is as follows. Catalyzes the isomerization between 2-isopropylmalate and 3-isopropylmalate, via the formation of 2-isopropylmaleate. This is 3-isopropylmalate dehydratase large subunit from Geobacillus thermodenitrificans (strain NG80-2).